Reading from the N-terminus, the 382-residue chain is Queuine tRNA-ribosyltransferase (382 aa).

Asp-96 (proton acceptor) is an active-site residue. Residues 96–100, Asp-151, Gln-194, and Gly-221 contribute to the substrate site; that span reads DSGGF. The segment at 252–258 is RNA binding; that stretch reads GVGAPDS. Asp-271 functions as the Nucleophile in the catalytic mechanism. An RNA binding; important for wobble base 34 recognition region spans residues 276–280; it reads TRIAR. The Zn(2+) site is built by Cys-309, Cys-311, Cys-314, and His-340.

This sequence belongs to the queuine tRNA-ribosyltransferase family. As to quaternary structure, homodimer. Within each dimer, one monomer is responsible for RNA recognition and catalysis, while the other monomer binds to the replacement base PreQ1. Zn(2+) is required as a cofactor.

It catalyses the reaction 7-aminomethyl-7-carbaguanine + guanosine(34) in tRNA = 7-aminomethyl-7-carbaguanosine(34) in tRNA + guanine. Its pathway is tRNA modification; tRNA-queuosine biosynthesis. Functionally, catalyzes the base-exchange of a guanine (G) residue with the queuine precursor 7-aminomethyl-7-deazaguanine (PreQ1) at position 34 (anticodon wobble position) in tRNAs with GU(N) anticodons (tRNA-Asp, -Asn, -His and -Tyr). Catalysis occurs through a double-displacement mechanism. The nucleophile active site attacks the C1' of nucleotide 34 to detach the guanine base from the RNA, forming a covalent enzyme-RNA intermediate. The proton acceptor active site deprotonates the incoming PreQ1, allowing a nucleophilic attack on the C1' of the ribose to form the product. After dissociation, two additional enzymatic reactions on the tRNA convert PreQ1 to queuine (Q), resulting in the hypermodified nucleoside queuosine (7-(((4,5-cis-dihydroxy-2-cyclopenten-1-yl)amino)methyl)-7-deazaguanosine). In Lactococcus lactis subsp. lactis (strain IL1403) (Streptococcus lactis), this protein is Queuine tRNA-ribosyltransferase.